Consider the following 707-residue polypeptide: Polyribonucleotide nucleotidyltransferase (707 aa).

2 residues coordinate Mg(2+): Asp-488 and Asp-494. Positions Pro-555–Ile-614 constitute a KH domain. Residues Gly-624–Lys-692 enclose the S1 motif domain.

The protein belongs to the polyribonucleotide nucleotidyltransferase family. Mg(2+) is required as a cofactor.

Its subcellular location is the cytoplasm. It catalyses the reaction RNA(n+1) + phosphate = RNA(n) + a ribonucleoside 5'-diphosphate. In terms of biological role, involved in mRNA degradation. Catalyzes the phosphorolysis of single-stranded polyribonucleotides processively in the 3'- to 5'-direction. The polypeptide is Polyribonucleotide nucleotidyltransferase (Polaromonas sp. (strain JS666 / ATCC BAA-500)).